The sequence spans 328 residues: MTIRKALSLDFLKPILELEYQIQQLSKISTYQQVVLDQELVSFKEQLSILKYEVFQSLTPLQRLHLVRQADRPTTLDYIPYIMSEWLELHGDRGGKDDPALVGGIGKLNNYTVIFVGHQRGKDTKDNVLRNFGMASPGGYRKALRLMQHANQFNFPILTFIDTPGAWAGIDAETLGQGEAIAVNLREMFSFDVPIICTILGEGGSGGALGIGIGDKILMLEYAVYTVATPEACAAILWKDSKRSLDAAEALKITSADLKVLGVIDKVVKEPIGGSQSNPSQAAYILKESLISELHFLTQLLPSKRKNLRYSKFRKIGTFYEGSEDYFG.

In terms of domain architecture, CoA carboxyltransferase C-terminal spans 42–296 (SFKEQLSILK…KESLISELHF (255 aa)).

Belongs to the AccA family. In terms of assembly, acetyl-CoA carboxylase is a heterohexamer composed of biotin carboxyl carrier protein (accB), biotin carboxylase (accC) and two subunits each of ACCase subunit alpha (accA) and ACCase subunit beta (accD).

Its subcellular location is the plastid. The protein localises to the chloroplast. The catalysed reaction is N(6)-carboxybiotinyl-L-lysyl-[protein] + acetyl-CoA = N(6)-biotinyl-L-lysyl-[protein] + malonyl-CoA. It participates in lipid metabolism; malonyl-CoA biosynthesis; malonyl-CoA from acetyl-CoA: step 1/1. Component of the acetyl coenzyme A carboxylase (ACC) complex. First, biotin carboxylase catalyzes the carboxylation of biotin on its carrier protein (BCCP) and then the CO(2) group is transferred by the carboxyltransferase to acetyl-CoA to form malonyl-CoA. The polypeptide is Acetyl-coenzyme A carboxylase carboxyl transferase subunit alpha (Gracilaria tenuistipitata var. liui (Red alga)).